The chain runs to 343 residues: MALTPTNLNNKMSLQMKMDCQEQQLTKKNNGFFQKLNVTEGAMQDLLKEIIKVDHILDRSDDEDDISSENPQTDFLHKGMLELEAEHDQDLSKQDKQETDVDEDPQASTSLQFSKKNLLELCLKGMFLKLNYWNTKIGLQVKELGADYIDGTEKIDNIIKKINVTENTVKSLLKDMLTLKGQIEKLEDRGLDLDQGTSTEVNTCNEVYELKKKVIERLEDLCKNVELLSAKLRMYQMEAEDTDSHSSEEIDTEEMEALLPQAPASFLVQKSPPRNTAWKRALRIFIMFDVLTVTGLLCYILFFGATFLFERVLLRMLGCRTTWDLREMREPFLNLEVEALLPS.

Basic and acidic residues predominate over residues 86–99 (EHDQDLSKQDKQET). A disordered region spans residues 86–108 (EHDQDLSKQDKQETDVDEDPQAS). Positions 152-238 (TEKIDNIIKK…SAKLRMYQME (87 aa)) form a coiled coil. A helical transmembrane segment spans residues 284–304 (IFIMFDVLTVTGLLCYILFFG).

The protein localises to the membrane. This is Single-pass membrane and coiled-coil domain-containing protein 2 (SMCO2) from Homo sapiens (Human).